Consider the following 33-residue polypeptide: NAD-reducing hydrogenase HoxS subunit gamma (33 aa).

Residues 1–33 enclose the 2Fe-2S ferredoxin-type domain; that stretch reads SIEIEIDGVTVTTEESRTLVDVAAEAGVYIPTL.

Belongs to the complex I 75 kDa subunit family. In terms of assembly, tetramer of an alpha and a gamma subunits (flavin-containing dimer), and a delta and a nickel-containing beta subunits (hydrogenase dimer). [4Fe-4S] cluster serves as cofactor.

It localises to the cytoplasm. The catalysed reaction is H2 + NAD(+) = NADH + H(+). Subunits alpha and gamma of HoxS constitute an NADH--oxidoreductase. This is NAD-reducing hydrogenase HoxS subunit gamma (hoxU) from Rhodococcus opacus (Nocardia opaca).